A 501-amino-acid chain; its full sequence is Endosomal/lysosomal proton channel TMEM175 (501 aa).

Residues 1–20 (MAAPRAATPGPGGGARKPEL) are disordered. At 1 to 31 (MAAPRAATPGPGGGARKPELDLELGSSTQTS) the chain is on the cytoplasmic side. A helical transmembrane segment spans residues 32–54 (HRLLAYSDALLSIIATVMILPVA). Residues 33-39 (RLLAYSD) carry the RxxxFSD motif 1 motif. At 55–75 (HTKIHPDQKLGESVQQLLLTK) the chain is on the lumenal side. A short helix H1-1 region spans residues 56–61 (TKIHPD). Positions 63–69 (KLGESVQ) are short helix H2-1. Residues 76 to 98 (IAVYLMTFLIVTVAWAAHVRLFQ) form a helical membrane-spanning segment. The Cytoplasmic portion of the chain corresponds to 99-104 (VIELID). The helical transmembrane segment at 105 to 126 (DVLALLNLACMMIITFLPYTFS) threads the bilayer. At 127–136 (LMASFPGVPF) the chain is on the lumenal side. The chain crosses the membrane as a helical span at residues 137–158 (GIFLFSVCAVVIGLIQAVIVVY). The Cytoplasmic segment spans residues 159-182 (GFYHPHLLNQQIQVSENQNFYKRH). Residues 183-203 (ILKIILRGPALCFLAAIFSFF) traverse the membrane as a helical segment. At 204–208 (FIPLS) the chain is on the lumenal side. Residues 209–228 (YLLLGLVIVFPHLSRFITWC) traverse the membrane as a helical segment. Topologically, residues 229 to 257 (KTKIVGHRDEEEASYSLETFSFYLSEPLS) are cytoplasmic. The helical transmembrane segment at 258-282 (KERVEAFSDGVYAIVATLLILDICE) threads the bilayer. The short motif at 260–266 (RVEAFSD) is the RxxxFSD motif 2 element. Over 283–309 (DNVPDPREVGEKFHGSLLEALSEYGPN) the chain is Lumenal. Residues 288-296 (PREVGEKFH) are short helix H1-2. The tract at residues 298–304 (SLLEALS) is short helix H2-2. The helical transmembrane segment at 310–332 (YLAYFGSFVTIGLLWFVHHSLFL) threads the bilayer. The Cytoplasmic portion of the chain corresponds to 333–338 (YVTKAT). The chain crosses the membrane as a helical span at residues 339 to 360 (RLMGLLNILSLAFIGGLPLAYQ). The Lumenal segment spans residues 361–375 (LTSEFAEKSHNEIEA). A helical transmembrane segment spans residues 376–396 (IQVSCVITFFASIFQFAIWTT). At 397–416 (ALLHERETLHPFARYGGKEH) the chain is on the cytoplasmic side. The helical transmembrane segment at 417 to 440 (AFMFAKLALYPCVSLGAFFLTCLL) threads the bilayer. At 441–442 (SE) the chain is on the lumenal side. A helical transmembrane segment spans residues 443-469 (FSTEIFHLMQIVIPFAFLALRIFVRIS). Topologically, residues 470-501 (LTVIKSVMSLSRRKVVLLEEEEACLSPTETHS) are cytoplasmic.

Belongs to the TMEM175 family. In terms of assembly, homodimer.

The protein localises to the endosome membrane. It is found in the lysosome membrane. The enzyme catalyses H(+)(in) = H(+)(out). The catalysed reaction is K(+)(in) = K(+)(out). Its activity is regulated as follows. Active at low pH (under pH 4.6): proton channel activity is activated by luminal side protons. Polyunsaturated fatty acids, such as arachidonic acid, also activate the channel activity. Proton-activated proton channel that catalyzes proton efflux from endosomes and lysosomes to maintain a steady-state pH. Activated at low pH (under pH 4.6) by luminal side protons: selectively mediates lysosomal proton release from lysosomes, eliciting a proton leak that balances V-ATPase activity to maintain pH homeostasis. Regulation of lumenal pH stability is required for autophagosome-lysosome fusion. Also acts as a potassium channel at higher pH, regulating potassium conductance in endosomes and lysosomes. This chain is Endosomal/lysosomal proton channel TMEM175, found in Gallus gallus (Chicken).